The following is a 342-amino-acid chain: Phosphoribosylformylglycinamidine cyclo-ligase (342 aa).

It belongs to the AIR synthase family.

It is found in the cytoplasm. It carries out the reaction 2-formamido-N(1)-(5-O-phospho-beta-D-ribosyl)acetamidine + ATP = 5-amino-1-(5-phospho-beta-D-ribosyl)imidazole + ADP + phosphate + H(+). The protein operates within purine metabolism; IMP biosynthesis via de novo pathway; 5-amino-1-(5-phospho-D-ribosyl)imidazole from N(2)-formyl-N(1)-(5-phospho-D-ribosyl)glycinamide: step 2/2. This Gloeothece citriformis (strain PCC 7424) (Cyanothece sp. (strain PCC 7424)) protein is Phosphoribosylformylglycinamidine cyclo-ligase.